The following is a 232-amino-acid chain: Large ribosomal subunit protein uL1 (232 aa).

The protein belongs to the universal ribosomal protein uL1 family. Part of the 50S ribosomal subunit.

Its function is as follows. Binds directly to 23S rRNA. The L1 stalk is quite mobile in the ribosome, and is involved in E site tRNA release. Protein L1 is also a translational repressor protein, it controls the translation of the L11 operon by binding to its mRNA. In Chelativorans sp. (strain BNC1), this protein is Large ribosomal subunit protein uL1.